The following is a 148-amino-acid chain: Ribonuclease H (148 aa).

The RNase H type-1 domain occupies 1-141 (MKTVEIYTDG…ADELANLGVK (141 aa)). 4 residues coordinate Mg(2+): Asp9, Glu47, Asp69, and Asp133.

Belongs to the RNase H family. As to quaternary structure, monomer. Mg(2+) is required as a cofactor.

Its subcellular location is the cytoplasm. The catalysed reaction is Endonucleolytic cleavage to 5'-phosphomonoester.. In terms of biological role, endonuclease that specifically degrades the RNA of RNA-DNA hybrids. The chain is Ribonuclease H from Hahella chejuensis (strain KCTC 2396).